We begin with the raw amino-acid sequence, 400 residues long: Acetate kinase (400 aa).

Asn-7 contacts Mg(2+). Residue Lys-14 participates in ATP binding. Arg-90 contacts substrate. Asp-147 (proton donor/acceptor) is an active-site residue. Residues 207–211, 282–284, and 331–335 contribute to the ATP site; these read HLGNG, DFR, and GIGEN. Residue Glu-384 coordinates Mg(2+).

The protein belongs to the acetokinase family. Homodimer. Requires Mg(2+) as cofactor. Mn(2+) is required as a cofactor.

It localises to the cytoplasm. The catalysed reaction is acetate + ATP = acetyl phosphate + ADP. The protein operates within metabolic intermediate biosynthesis; acetyl-CoA biosynthesis; acetyl-CoA from acetate: step 1/2. Catalyzes the formation of acetyl phosphate from acetate and ATP. Can also catalyze the reverse reaction. This chain is Acetate kinase, found in Thermoanaerobacterium thermosaccharolyticum (strain ATCC 7956 / DSM 571 / NCIMB 9385 / NCA 3814 / NCTC 13789 / WDCM 00135 / 2032) (Clostridium thermosaccharolyticum).